The following is a 588-amino-acid chain: Intracellular maltogenic amylase (588 aa).

Asparagine 149, serine 155, glycine 174, and aspartate 176 together coordinate Ca(2+). Substrate is bound by residues histidine 249 and arginine 325. The active-site Nucleophile is aspartate 327. Glutamate 356 (proton donor) is an active-site residue. Substrate-binding positions include 422-423, aspartate 467, and arginine 471; that span reads HD.

It belongs to the glycosyl hydrolase 13 family. BbmA subfamily. As to quaternary structure, monomer or homodimer; in equilibrium. Requires Ca(2+) as cofactor.

The protein resides in the cytoplasm. In terms of biological role, hydrolyzes beta-cyclodextrin to maltose and glucose, soluble starch to maltose and glucose, and pullulan to panose with trace amounts of maltose and glucose. It is also able to hydrolyze acarbose. Can also exhibit a transglycosylation activity transferring glucose or maltose to another moiety of sugars by forming alpha-(1,6)- and alpha-(1,3)-glycosidic linkages upon the hydrolysis of substrate at concentrations of 5% or higher. The sequence is that of Intracellular maltogenic amylase (bbmA) from Bacillus subtilis.